A 205-amino-acid chain; its full sequence is Coatomer subunit zeta-2 (205 aa).

Over residues 1–12 (MQRPEAWPRPHP) the composition is skewed to basic and acidic residues. A disordered region spans residues 1–33 (MQRPEAWPRPHPGEGASAAQAGGAAPPTRATEQ). A compositionally biased stretch (low complexity) spans 13–30 (GEGASAAQAGGAAPPTRA).

The protein belongs to the adaptor complexes small subunit family. Oligomeric complex.

It is found in the cytoplasm. It localises to the cytosol. Its subcellular location is the endoplasmic reticulum-Golgi intermediate compartment membrane. The protein localises to the golgi apparatus membrane. The protein resides in the cytoplasmic vesicle. It is found in the COPI-coated vesicle membrane. The coatomer is a cytosolic protein complex that binds to dilysine motifs and reversibly associates with Golgi non-clathrin-coated vesicles, which further mediate biosynthetic protein transport from the ER, via the Golgi up to the trans Golgi network. Coatomer complex is required for budding from Golgi membranes, and is essential for the retrograde Golgi-to-ER transport of dilysine-tagged proteins. The zeta subunit may be involved in regulating the coat assembly and, hence, the rate of biosynthetic protein transport due to its association-dissociation properties with the coatomer complex. This Mus musculus (Mouse) protein is Coatomer subunit zeta-2 (Copz2).